The chain runs to 364 residues: Small ribosomal subunit biogenesis GTPase RsgA (364 aa).

The CP-type G domain occupies 101 to 264 (KGLVEKPGVP…VIDTPGLREL (164 aa)). GTP is bound by residues 154–157 (NKSD) and 206–214 (GSSGAGKST). Zn(2+)-binding residues include cysteine 288, cysteine 293, histidine 295, and cysteine 301. The interval 339–364 (QVAQKRKRKTIPRQGKRWRREHGDGQ) is disordered. Residues 342 to 358 (QKRKRKTIPRQGKRWRR) show a composition bias toward basic residues.

This sequence belongs to the TRAFAC class YlqF/YawG GTPase family. RsgA subfamily. As to quaternary structure, monomer. Associates with 30S ribosomal subunit, binds 16S rRNA. The cofactor is Zn(2+).

It localises to the cytoplasm. Functionally, one of several proteins that assist in the late maturation steps of the functional core of the 30S ribosomal subunit. Helps release RbfA from mature subunits. May play a role in the assembly of ribosomal proteins into the subunit. Circularly permuted GTPase that catalyzes slow GTP hydrolysis, GTPase activity is stimulated by the 30S ribosomal subunit. This chain is Small ribosomal subunit biogenesis GTPase RsgA, found in Syntrophotalea carbinolica (strain DSM 2380 / NBRC 103641 / GraBd1) (Pelobacter carbinolicus).